The sequence spans 272 residues: Putative UTP--glucose-1-phosphate uridylyltransferase (272 aa).

This sequence belongs to the UDPGP type 2 family.

It carries out the reaction alpha-D-glucose 1-phosphate + UTP + H(+) = UDP-alpha-D-glucose + diphosphate. The chain is Putative UTP--glucose-1-phosphate uridylyltransferase (ytdA) from Bacillus subtilis (strain 168).